The primary structure comprises 372 residues: Saccharopine dehydrogenase [NAD(+), L-lysine-forming] (372 aa).

2 residues coordinate L-saccharopine: R18 and K77. Residue K77 is the Proton acceptor of the active site. The active-site Proton donor is H95. An L-saccharopine-binding site is contributed by Q100. Residue R129 coordinates NAD(+). R130 and F134 together coordinate L-saccharopine. NAD(+) contacts are provided by residues 200 to 201 (GR), D224, T228, Y248, and V275. The cysteines at positions 202 and 246 are disulfide-linked. L-saccharopine is bound at residue 276–278 (SAD). 316–319 (IDHL) contacts NAD(+).

This sequence belongs to the AlaDH/PNT family. As to quaternary structure, monomer.

The enzyme catalyses L-saccharopine + NAD(+) + H2O = L-lysine + 2-oxoglutarate + NADH + H(+). It participates in amino-acid biosynthesis; L-lysine biosynthesis via AAA pathway; L-lysine from L-alpha-aminoadipate (fungal route): step 3/3. Catalyzes the NAD(+)-dependent cleavage of saccharopine to L-lysine and 2-oxoglutarate, the final step in the alpha-aminoadipate (AAA) pathway for lysin biosynthesis. The sequence is that of Saccharopine dehydrogenase [NAD(+), L-lysine-forming] (lys-4) from Neurospora crassa (strain ATCC 24698 / 74-OR23-1A / CBS 708.71 / DSM 1257 / FGSC 987).